The sequence spans 88 residues: Synaptonemal complex central element protein 3 (88 aa).

A coiled-coil region spans residues glutamate 7–lysine 75.

Homodimer. Can form higher-order homooligomers. Interacts with SYCP1 (via tetrameric core); the interaction remodels SYCP1 homotetramers to 2:1 heterotrimers with SYCE3. SYCP1/SYCE3 heterotrimers form lattice assemblies as part of the mature synaptonemal complex via both lateral and head-to-head interactions. Interacts with the SYCE1-SIX6OS1 complex; the interaction recruits the SYCE1-SIX6OS1 complex to the central element of the synaptonemal complex. Interacts with the SYCE2-TEX12 complex; the interaction promotes fibrous assembly of SYCE2-TEX12 as part of the synaptonemal complex central element. Interacts with SYCE1. Interacts with SYCE2. Interacts with proteasome subunit PSMA8; to participate in meiosis progression during spermatogenesis. Interacts with SPO16.

The protein localises to the nucleus. It localises to the chromosome. Major component of the transverse central element of synaptonemal complexes (SCS), formed between homologous chromosomes during meiotic prophase. Required for the assembly of the central element of the synaptonemal complex during meiosis, via remodeling of SYCP1 lattice structures and promoting recruitment of SYCE2-TEX12 and SYCE1-SIX60S1 complexes. Required for chromosome loading of the central element-specific SCS proteins, and for initiating synapsis between homologous chromosomes. Chromosome loading appears to require SYCP1. Required for fertility and normal testis development. This is Synaptonemal complex central element protein 3 from Homo sapiens (Human).